The sequence spans 673 residues: DNA ligase (673 aa).

NAD(+) is bound by residues 33–37, 82–83, and glutamate 113; these read DYEYD and SL. Catalysis depends on lysine 115, which acts as the N6-AMP-lysine intermediate. Arginine 136, glutamate 170, lysine 285, and lysine 309 together coordinate NAD(+). Residues cysteine 403, cysteine 406, cysteine 421, and cysteine 426 each coordinate Zn(2+). The BRCT domain maps to 583–672; that stretch reads AKSDILKGYT…SHEEVEKILM (90 aa).

This sequence belongs to the NAD-dependent DNA ligase family. LigA subfamily. Mg(2+) serves as cofactor. The cofactor is Mn(2+).

It carries out the reaction NAD(+) + (deoxyribonucleotide)n-3'-hydroxyl + 5'-phospho-(deoxyribonucleotide)m = (deoxyribonucleotide)n+m + AMP + beta-nicotinamide D-nucleotide.. Its function is as follows. DNA ligase that catalyzes the formation of phosphodiester linkages between 5'-phosphoryl and 3'-hydroxyl groups in double-stranded DNA using NAD as a coenzyme and as the energy source for the reaction. It is essential for DNA replication and repair of damaged DNA. This is DNA ligase from Caldicellulosiruptor saccharolyticus (strain ATCC 43494 / DSM 8903 / Tp8T 6331).